An 86-amino-acid chain; its full sequence is Cell division topological specificity factor (86 aa).

The protein belongs to the MinE family.

In terms of biological role, prevents the cell division inhibition by proteins MinC and MinD at internal division sites while permitting inhibition at polar sites. This ensures cell division at the proper site by restricting the formation of a division septum at the midpoint of the long axis of the cell. The protein is Cell division topological specificity factor of Rhizobium etli (strain ATCC 51251 / DSM 11541 / JCM 21823 / NBRC 15573 / CFN 42).